We begin with the raw amino-acid sequence, 124 residues long: Large ribosomal subunit protein bL12 (124 aa).

Belongs to the bacterial ribosomal protein bL12 family. As to quaternary structure, homodimer. Part of the ribosomal stalk of the 50S ribosomal subunit. Forms a multimeric L10(L12)X complex, where L10 forms an elongated spine to which 2 to 4 L12 dimers bind in a sequential fashion. Binds GTP-bound translation factors.

In terms of biological role, forms part of the ribosomal stalk which helps the ribosome interact with GTP-bound translation factors. Is thus essential for accurate translation. This chain is Large ribosomal subunit protein bL12, found in Cereibacter sphaeroides (strain ATCC 17025 / ATH 2.4.3) (Rhodobacter sphaeroides).